Here is a 669-residue protein sequence, read N- to C-terminus: uncharacterized protein (669 aa).

Helical transmembrane passes span 9–29 (PLVI…IFIA), 48–68 (FSWF…ILSV), 87–107 (FLSW…MFFG), 139–159 (WGIH…YFGF), 186–206 (AIDV…LGFG), 224–244 (SFAL…FSAI), 259–279 (LTLA…LYLL), 314–334 (WTVL…LFIA), 345–365 (FIFG…TVFG), 397–417 (YLPL…LFFI), 444–464 (AIMW…SGGL), and 470–490 (MTLI…FSLW).

It belongs to the BCCT transporter (TC 2.A.15) family.

It localises to the cell inner membrane. This is an uncharacterized protein from Haemophilus influenzae (strain ATCC 51907 / DSM 11121 / KW20 / Rd).